The following is a 603-amino-acid chain: Golgin subfamily A member 8B (603 aa).

4 disordered regions span residues 1–82 (MAEE…NSRS), 95–125 (LKQQKKQVEHQLEEEKKANNEKQKAERELEG), 398–419 (TSAEKEPEAAVPASGTGGESSG), and 460–492 (PGDSAKDASPGGGHHQAGPGQGGEEGEAAGAAG). Over residues 46-66 (AASGGCHSSEASSSASSSLHA) the composition is skewed to low complexity. A compositionally biased stretch (polar residues) spans 69-82 (SPCQEQAAVLNSRS). Coiled-coil stretches lie at residues 82–173 (SIKI…GELE) and 212–440 (LKGH…LELG). Residues 100–124 (KQVEHQLEEEKKANNEKQKAERELE) show a composition bias toward basic and acidic residues. Positions 469–482 (PGGGHHQAGPGQGG) are enriched in gly residues. Residues 491–603 (AGDGVAACGS…CWAWLPRRRR (113 aa)) form a golgi-targeting domain region.

The protein belongs to the GOLGA8 family. Highly expressed in brain, heart and kidney. Detected at lower levels in liver, thymus, spleen, lung and peripheral blood leukocytes.

The protein localises to the golgi apparatus. The protein resides in the golgi stack membrane. May be involved in maintaining Golgi structure. The chain is Golgin subfamily A member 8B (GOLGA8B) from Homo sapiens (Human).